A 126-amino-acid polypeptide reads, in one-letter code: Pancreatic polypeptide prohormone (126 aa).

An N-terminal signal peptide occupies residues 1–26 (MTATRCCLWLLLLGTCMALLLPEAWG). Y62 bears the Tyrosine amide mark. The interval 77 to 126 (RQSHAAAPGGSHRHPPAGLPAAKGGTGVSGSPPKPWDCLPCRAHSLPSQS) is disordered.

This sequence belongs to the NPY family. In terms of processing, no icosapeptide-like peptide is cleaved from the C-terminal.

Its subcellular location is the secreted. Hormone secreted by pancreatic cells that acts as a regulator of pancreatic and gastrointestinal functions probably by signaling through the G protein-coupled receptor NPY4R2. This chain is Pancreatic polypeptide prohormone (PPY), found in Cavia porcellus (Guinea pig).